The following is a 465-amino-acid chain: Ribulose bisphosphate carboxylase large chain (465 aa).

Residue K4 is modified to N6,N6,N6-trimethyllysine. Positions 113 and 163 each coordinate substrate. Residue K165 is the Proton acceptor of the active site. K167 is a substrate binding site. K191, D193, and E194 together coordinate Mg(2+). An N6-carboxylysine modification is found at K191. H284 (proton acceptor) is an active-site residue. 3 residues coordinate substrate: R285, H317, and S369.

Belongs to the RuBisCO large chain family. Type I subfamily. In terms of assembly, heterohexadecamer of 8 large chains and 8 small chains; disulfide-linked. The disulfide link is formed within the large subunit homodimers. The cofactor is Mg(2+). In terms of processing, the disulfide bond which can form in the large chain dimeric partners within the hexadecamer appears to be associated with oxidative stress and protein turnover.

It is found in the plastid. Its subcellular location is the chloroplast. The catalysed reaction is 2 (2R)-3-phosphoglycerate + 2 H(+) = D-ribulose 1,5-bisphosphate + CO2 + H2O. It catalyses the reaction D-ribulose 1,5-bisphosphate + O2 = 2-phosphoglycolate + (2R)-3-phosphoglycerate + 2 H(+). Its function is as follows. RuBisCO catalyzes two reactions: the carboxylation of D-ribulose 1,5-bisphosphate, the primary event in carbon dioxide fixation, as well as the oxidative fragmentation of the pentose substrate in the photorespiration process. Both reactions occur simultaneously and in competition at the same active site. The sequence is that of Ribulose bisphosphate carboxylase large chain from Dillenia indica (Elephant apple).